The primary structure comprises 984 residues: Probable beta-galactosidase C (984 aa).

Residues 1-23 (MRLLSFIYLVWLALLTGTPQVSA) form the signal peptide. Residues tyrosine 82, asparagine 127, alanine 128, glutamate 129, and asparagine 187 each coordinate substrate. Glutamate 188 functions as the Proton donor in the catalytic mechanism. The N-linked (GlcNAc...) asparagine glycan is linked to asparagine 197. Substrate is bound at residue tyrosine 251. A disulfide bridge connects residues cysteine 257 and cysteine 304. Asparagine 276 carries an N-linked (GlcNAc...) asparagine glycan. Glutamate 287 (nucleophile) is an active-site residue. Tyrosine 353 contributes to the substrate binding site. N-linked (GlcNAc...) asparagine glycosylation is found at asparagine 391, asparagine 421, asparagine 434, asparagine 517, asparagine 602, asparagine 677, asparagine 715, asparagine 720, asparagine 759, and asparagine 805.

The protein belongs to the glycosyl hydrolase 35 family.

The protein localises to the secreted. It catalyses the reaction Hydrolysis of terminal non-reducing beta-D-galactose residues in beta-D-galactosides.. Cleaves beta-linked terminal galactosyl residues from gangliosides, glycoproteins, and glycosaminoglycans. The sequence is that of Probable beta-galactosidase C (lacC) from Aspergillus oryzae (strain ATCC 42149 / RIB 40) (Yellow koji mold).